A 415-amino-acid polypeptide reads, in one-letter code: Diaminopimelate decarboxylase (415 aa).

At K60 the chain carries N6-(pyridoxal phosphate)lysine. Pyridoxal 5'-phosphate contacts are provided by residues G239 and 274–277 (EPGR). Substrate-binding residues include R277, R313, and Y317. C344 (proton donor) is an active-site residue. The substrate site is built by E345 and Y372. Y372 lines the pyridoxal 5'-phosphate pocket.

It belongs to the Orn/Lys/Arg decarboxylase class-II family. LysA subfamily. Homodimer. Requires pyridoxal 5'-phosphate as cofactor.

The catalysed reaction is meso-2,6-diaminopimelate + H(+) = L-lysine + CO2. Its pathway is amino-acid biosynthesis; L-lysine biosynthesis via DAP pathway; L-lysine from DL-2,6-diaminopimelate: step 1/1. Its function is as follows. Specifically catalyzes the decarboxylation of meso-diaminopimelate (meso-DAP) to L-lysine. The polypeptide is Diaminopimelate decarboxylase (Haemophilus influenzae (strain ATCC 51907 / DSM 11121 / KW20 / Rd)).